The following is a 109-amino-acid chain: Nucleoid-associated protein YbaB (109 aa).

This sequence belongs to the YbaB/EbfC family. Homodimer.

It is found in the cytoplasm. The protein localises to the nucleoid. In terms of biological role, binds to DNA and alters its conformation. May be involved in regulation of gene expression, nucleoid organization and DNA protection. This Escherichia coli O127:H6 (strain E2348/69 / EPEC) protein is Nucleoid-associated protein YbaB.